A 1356-amino-acid chain; its full sequence is Transmembrane protein 94 (1356 aa).

Residues 1–64 (MDLKEKHLGE…FLHHSNRCSC (64 aa)) lie on the Cytoplasmic side of the membrane. Residues 65–85 (FHWPGASLMLLAVLLLLGCCG) traverse the membrane as a helical segment. The Lumenal segment spans residues 86-92 (GQPAGSR). Residues 93–113 (GVGLVNASALFLLLLLNLVLI) traverse the membrane as a helical segment. Over 114–273 (GRQDRLKRRE…RPVTALDNER (160 aa)) the chain is Cytoplasmic. A phosphoserine mark is found at serine 221 and serine 225. A helical membrane pass occupies residues 274–294 (FTVQSVMLHYAVPVVLAGFLI). Residues 295 to 320 (TNALRFIFSAPGVTSWQYTLLQLQVN) lie on the Lumenal side of the membrane. Residues 321-341 (GVLPILPLLFPVLWVLATACG) form a helical membrane-spanning segment. Over 342–1092 (EARVLAQMSK…RHATYGIRKC (751 aa)) the chain is Cytoplasmic. The DKQGIL signature appears at 417 to 422 (DKQGIL). 2 disordered regions span residues 439–461 (VEPPHSSHEDLTDGLSTRSFCHP) and 483–541 (EQER…ESDP). Over residues 440–449 (EPPHSSHEDL) the composition is skewed to basic and acidic residues. A phosphoserine mark is found at serine 444, serine 445, and serine 454. A compositionally biased stretch (basic residues) spans 502-511 (HHKAHGRSKH). Serine 513, serine 518, serine 798, and serine 941 each carry phosphoserine. The chain crosses the membrane as a helical span at residues 1093–1113 (FLFLLQCQLTLVVIQFLSCLV). The Lumenal portion of the chain corresponds to 1114 to 1120 (QLPPLLS). The chain crosses the membrane as a helical span at residues 1121 to 1141 (TTDILWLSCFCYPLLSISLLG). Over 1142 to 1167 (KPPHSSIMSMATGKNLQSIPKKTQHY) the chain is Cytoplasmic. Residues 1168–1188 (FLLCFLLKFSLTISSCLICFG) traverse the membrane as a helical segment. The Lumenal segment spans residues 1189-1228 (FTLQSFCDSSRDRNLTNCSSVMLPSNDDRAPAWFEDFANG). N-linked (GlcNAc...) asparagine glycosylation is found at asparagine 1202 and asparagine 1205. A helical transmembrane segment spans residues 1229-1249 (LLSAQKLTAALIVLHTVFISI). At 1250–1261 (THVHRTKPLWRK) the chain is on the cytoplasmic side. Residues 1262–1282 (SPLTNLWWAVTVPVVLLGQVV) form a helical membrane-spanning segment. At 1283-1306 (QTAVDLQLWTHRDSHVHFGLEDVP) the chain is on the lumenal side. Residues 1307–1327 (LLTWLLGCLSLVLVVVTNEIV) traverse the membrane as a helical segment. Residues 1328–1356 (KLHEIRVRVRYQKRQKLQFETKLGMNSPF) are Cytoplasmic-facing. Residues 1351–1353 (GMN) carry the GMN; metal-binding motif motif.

In terms of assembly, forms homooligomers. In terms of tissue distribution, expressed ubiquitously.

The protein resides in the endoplasmic reticulum membrane. Could function in the uptake of Mg(2+) from the cytosol into the endoplasmic reticulum and regulate intracellular Mg(2+) homeostasis. The chain is Transmembrane protein 94 from Homo sapiens (Human).